The primary structure comprises 245 residues: Octanoyltransferase (245 aa).

The BPL/LPL catalytic domain occupies 54 to 238 (GEATELVWLL…AFENIFGETR (185 aa)). Substrate contacts are provided by residues 92–99 (RGGQLTYH), 167–169 (AIG), and 180–182 (GIA). Catalysis depends on Cys-198, which acts as the Acyl-thioester intermediate.

Belongs to the LipB family.

The protein resides in the cytoplasm. It catalyses the reaction octanoyl-[ACP] + L-lysyl-[protein] = N(6)-octanoyl-L-lysyl-[protein] + holo-[ACP] + H(+). Its pathway is protein modification; protein lipoylation via endogenous pathway; protein N(6)-(lipoyl)lysine from octanoyl-[acyl-carrier-protein]: step 1/2. In terms of biological role, catalyzes the transfer of endogenously produced octanoic acid from octanoyl-acyl-carrier-protein onto the lipoyl domains of lipoate-dependent enzymes. Lipoyl-ACP can also act as a substrate although octanoyl-ACP is likely to be the physiological substrate. This chain is Octanoyltransferase, found in Rhodopseudomonas palustris (strain ATCC BAA-98 / CGA009).